The chain runs to 153 residues: uncharacterized protein (153 aa).

Its subcellular location is the mitochondrion. This is an uncharacterized protein from Arabidopsis thaliana (Mouse-ear cress).